A 688-amino-acid polypeptide reads, in one-letter code: PR domain zinc finger protein 8 (688 aa).

Residues Lys16–Gly131 form the SET domain. Tyr130 lines the S-adenosyl-L-methionine pocket. The C2H2-type 1 zinc-finger motif lies at Tyr154–His182. Disordered stretches follow at residues Thr184–Gly309 and Glu397–Ser506. Residues Gln192–Lys208 are compositionally biased toward gly residues. Low complexity-rich tracts occupy residues Glu209–Gln219 and Gly275–Gly284. Composition is skewed to gly residues over residues Ala414–Asn424 and Leu470–Gln489. C2H2-type zinc fingers lie at residues Asn624–His647 and Leu665–His687.

The protein belongs to the class V-like SAM-binding methyltransferase superfamily. As to quaternary structure, interacts with BHLHE22. Interacts with EPM2A and NHLRC1. This interaction sequesters EPM2A and NHLRC1 to the nucleus. As to expression, expressed in brain, heart, liver, testes, retina. Highest expression is observed in the retina and hippocampus; moderately expressed in the cortex and cerebellum. In the retina, it is expressed in bipolar and amacrine cells.

The protein resides in the nucleus. Its function is as follows. Probable histone methyltransferase, preferentially acting on 'Lys-9' of histone H3. Histone methyltransferase activity has not been confirmed in other species. Involved in the control of steroidogenesis through transcriptional repression of steroidogenesis marker genes such as CYP17A1 and LHCGR. Forms with BHLHE22 a transcriptional repressor complex controlling genes involved in neural development and neuronal differentiation. In the retina, it is required for rod bipolar and type 2 OFF-cone bipolar cell survival. This chain is PR domain zinc finger protein 8 (Prdm8), found in Mus musculus (Mouse).